Consider the following 259-residue polypeptide: Hydroxyacylglutathione hydrolase (259 aa).

Zn(2+) is bound by residues histidine 56, histidine 58, aspartate 60, histidine 61, histidine 112, aspartate 133, and histidine 171.

Belongs to the metallo-beta-lactamase superfamily. Glyoxalase II family. As to quaternary structure, monomer. The cofactor is Zn(2+).

The catalysed reaction is an S-(2-hydroxyacyl)glutathione + H2O = a 2-hydroxy carboxylate + glutathione + H(+). Its pathway is secondary metabolite metabolism; methylglyoxal degradation; (R)-lactate from methylglyoxal: step 2/2. In terms of biological role, thiolesterase that catalyzes the hydrolysis of S-D-lactoyl-glutathione to form glutathione and D-lactic acid. The chain is Hydroxyacylglutathione hydrolase from Pseudomonas entomophila (strain L48).